Here is a 216-residue protein sequence, read N- to C-terminus: Probable calcium-binding protein CML35 (216 aa).

Positions 18-58 (TKSKASVSRSEPSSFSSNASSSSSDGSYGNLKQGPTATPIS) are disordered. The segment covering 23–44 (SVSRSEPSSFSSNASSSSSDGS) has biased composition (low complexity). 4 EF-hand domains span residues 66–101 (DFYTELVQAFKLIDRDDDGVVSRGDLAALISRLSHE), 103–138 (PSQEEVSLMLREVDGGDGGCISLEDLASRVAGTSGE), 141–176 (VETEELREVFEIFDVDRNGKISAEELHRVFGVIGDE), and 178–213 (CTLEECMRMIATVDGNGDGFVCFDDFCRMMVPAMND). Ca(2+)-binding residues include D79, D81, D83, and D90. Ca(2+) contacts are provided by D154, D156, N158, K160, E165, D191, N193, D195, and D202.

Potential calcium sensor. The sequence is that of Probable calcium-binding protein CML35 (CML35) from Arabidopsis thaliana (Mouse-ear cress).